Here is a 510-residue protein sequence, read N- to C-terminus: Dermokine (510 aa).

The signal sequence occupies residues 1–21 (MKLKGSLACLLLFLLLGSGEA). Residues 117-362 (VDPAHKSWQG…SSGEGEAVSG (246 aa)) are disordered. Polar residues predominate over residues 124–137 (WQGTPGSNGAWGTN). Over residues 141–158 (PSGGHGIPGSQGSSGGPG) the composition is skewed to gly residues. Polar residues predominate over residues 194–221 (GANSQGTSPQPGSVRSNNNRNTECTTPP). 3 stretches are compositionally biased toward gly residues: residues 222–231 (GSGGSSGNSG), 240–254 (TNGG…GGSN), and 264–292 (SNGG…GGSN). 2 stretches are compositionally biased toward low complexity: residues 293–303 (AGSSGSSGSSS) and 319–332 (PSPS…SGVR). Gly residues predominate over residues 344-355 (GGSGGQGQGSSG).

This sequence belongs to the dermokine family. Homooligomer. Seems to be able to homodimerize and homotrimerize. In terms of processing, O-glycosylated.

It is found in the secreted. Its function is as follows. May act as a soluble regulator of keratinocyte differentiation. The protein is Dermokine (DMKN) of Bos taurus (Bovine).